Reading from the N-terminus, the 57-residue chain is MSEFDAQRVAERIDIVLDILVAGDYHSAIHNLEILKAELLRQVAESTPDIPKAPWEI.

The protein belongs to the UPF0509 family.

This is UPF0509 protein YciZ from Escherichia coli O127:H6 (strain E2348/69 / EPEC).